The chain runs to 517 residues: Crotonobetaine/carnitine--CoA ligase (517 aa).

This sequence belongs to the ATP-dependent AMP-binding enzyme family.

It carries out the reaction 4-(trimethylamino)butanoate + ATP + CoA = 4-(trimethylamino)butanoyl-CoA + AMP + diphosphate. The catalysed reaction is crotonobetaine + ATP + CoA = crotonobetainyl-CoA + AMP + diphosphate. It catalyses the reaction (R)-carnitine + ATP + CoA = (R)-carnitinyl-CoA + AMP + diphosphate. It participates in amine and polyamine metabolism; carnitine metabolism. Its function is as follows. Catalyzes the transfer of CoA to carnitine, generating the initial carnitinyl-CoA needed for the CaiB reaction cycle. Also has activity toward crotonobetaine and gamma-butyrobetaine. This is Crotonobetaine/carnitine--CoA ligase from Salmonella enteritidis PT4 (strain P125109).